A 162-amino-acid polypeptide reads, in one-letter code: Probable chorismate pyruvate-lyase (162 aa).

Substrate is bound by residues arginine 54, leucine 92, and glutamate 149.

This sequence belongs to the UbiC family.

The protein localises to the cytoplasm. It carries out the reaction chorismate = 4-hydroxybenzoate + pyruvate. Its pathway is cofactor biosynthesis; ubiquinone biosynthesis. Functionally, removes the pyruvyl group from chorismate, with concomitant aromatization of the ring, to provide 4-hydroxybenzoate (4HB) for the ubiquinone pathway. This chain is Probable chorismate pyruvate-lyase, found in Methylococcus capsulatus (strain ATCC 33009 / NCIMB 11132 / Bath).